Reading from the N-terminus, the 131-residue chain is Small ribosomal subunit protein uS8 (131 aa).

The protein belongs to the universal ribosomal protein uS8 family. In terms of assembly, part of the 30S ribosomal subunit. Contacts proteins S5 and S12.

One of the primary rRNA binding proteins, it binds directly to 16S rRNA central domain where it helps coordinate assembly of the platform of the 30S subunit. The protein is Small ribosomal subunit protein uS8 of Paracidovorax citrulli (strain AAC00-1) (Acidovorax citrulli).